We begin with the raw amino-acid sequence, 372 residues long: Heat-inducible transcription repressor HrcA (372 aa).

It belongs to the HrcA family.

In terms of biological role, negative regulator of class I heat shock genes (grpE-dnaK-dnaJ and groELS operons). Prevents heat-shock induction of these operons. The polypeptide is Heat-inducible transcription repressor HrcA (Chloroflexus aurantiacus (strain ATCC 29366 / DSM 635 / J-10-fl)).